We begin with the raw amino-acid sequence, 207 residues long: MPDYALEAAHGGLVVGIDEVGRGPLAGPVVASAVAFTAPPSETLSSLLDDSKKLTARRRMLAYEALMADEQALIGIGAASVAEIERINIAQACYLAMRRALSRLGCTPDLALVDGKHAPKLPCPIKMVIGGDGISLSIAAASIIAKVTRDRLMVRLAVRHDAYGWERNAGYGTAAHMQGLKLRGVTPHHRRGFAPIRNMIEAEAHAA.

The 194-residue stretch at 12–205 (GLVVGIDEVG…IRNMIEAEAH (194 aa)) folds into the RNase H type-2 domain. A divalent metal cation contacts are provided by aspartate 18, glutamate 19, and aspartate 114.

This sequence belongs to the RNase HII family. Mn(2+) serves as cofactor. The cofactor is Mg(2+).

Its subcellular location is the cytoplasm. It carries out the reaction Endonucleolytic cleavage to 5'-phosphomonoester.. In terms of biological role, endonuclease that specifically degrades the RNA of RNA-DNA hybrids. The protein is Ribonuclease HII of Gluconobacter oxydans (strain 621H) (Gluconobacter suboxydans).